The following is a 107-amino-acid chain: MNAHKTAQNMSQEALYDVVRAPLITEKATLLSERNQVVFKVAPSATKPQIKAAVEKLFNVKVTGVNTLVQKGKVKRVKGRPGRRSDIKKAYVQLAEGQSIDLTAKLG.

Belongs to the universal ribosomal protein uL23 family. Part of the 50S ribosomal subunit. Contacts protein L29, and trigger factor when it is bound to the ribosome.

Its function is as follows. One of the early assembly proteins it binds 23S rRNA. One of the proteins that surrounds the polypeptide exit tunnel on the outside of the ribosome. Forms the main docking site for trigger factor binding to the ribosome. In Gluconobacter oxydans (strain 621H) (Gluconobacter suboxydans), this protein is Large ribosomal subunit protein uL23.